The primary structure comprises 481 residues: Protein hedgehog (481 aa).

A lipid anchor (N-palmitoyl cysteine) is attached at Cys93. Positions 157, 158, 163, 193, 194, 197, and 199 each coordinate Ca(2+). Gly265 is lipidated: Cholesterol glycine ester.

It belongs to the hedgehog family. Interacts with shf. Post-translationally, the C-terminal part of the hedgehog protein precursor displays an autoproteolysis activity that results in the cleavage of the full-length protein into two parts (N-product and C-product). In addition, the C-terminal part displays a cholesterol transferase activity that results by the covalent attachment of a cholesterol moiety to the C-terminal of the newly generated N-product. The N-product is the active species in both local and long-range signaling, whereas the C-product has no signaling activity. In terms of processing, cholesterylation is required for N-product targeting to lipid rafts and multimerization. N-palmitoylation by Rasp of the hedgehog N-product, within the secretory pathway, is required for the embryonic and larval patterning activities of the hedgehog signal.

Its subcellular location is the nucleus. It is found in the cytoplasm. It localises to the cell membrane. The enzyme catalyses glycyl-L-cysteinyl-[protein] + cholesterol + H(+) = [protein]-C-terminal glycyl cholesterol ester + N-terminal L-cysteinyl-[protein]. Functionally, the C-terminal part of the hedgehog protein precursor displays an autoproteolysis activity that results in the cleavage of the full-length protein into two parts (N-product and C-product). In addition, the C-terminal part displays a cholesterol transferase activity that results by the covalent attachment of a cholesterol moiety to the C-terminal of the newly generated N-product. Once cleaved, the C-product has no signaling activity and diffuses from the cell. In terms of biological role, the dually lipidated hedgehog protein N-product is a morphogen which is essential for a variety of patterning events during development. Establishes the anterior-posterior axis of the embryonic segments and patterns the larval imaginal disks. Binds to the patched (ptc) receptor, which functions in association with smoothened (smo), to activate the transcription of target genes wingless (wg), decapentaplegic (dpp) and ptc. In the absence of hh, ptc represses the constitutive signaling activity of smo through fused (fu). Essential component of a signaling pathway which regulates the Duox-dependent gut immune response to bacterial uracil; required to activate Cad99C-dependent endosome formation, norpA-dependent Ca2+ mobilization and p38 MAPK, which are essential steps in the Duox-dependent production of reactive oxygen species (ROS) in response to intestinal bacterial infection. During photoreceptor differentiation, it up-regulates transcription of Ubr3, which in turn promotes the hh-signaling pathway by mediating the ubiquitination and degradation of cos. The sequence is that of Protein hedgehog from Drosophila persimilis (Fruit fly).